The following is a 217-amino-acid chain: Non-structural protein NS3 (217 aa).

This sequence belongs to the orbivirus NS3 family.

In terms of biological role, may play a role in the release of virions from infected cells. This is Non-structural protein NS3 (Segment-10) from African horse sickness virus 6 (AHSV-6).